The chain runs to 517 residues: Cytochrome P450 monooxygenase penP (517 aa).

A helical transmembrane segment spans residues 17-37 (GEATVIWILVALVLVAYLILP). Cys-456 contacts heme. N-linked (GlcNAc...) asparagine glycosylation is present at Asn-501.

This sequence belongs to the cytochrome P450 family. It depends on heme as a cofactor.

Its subcellular location is the membrane. The protein operates within secondary metabolite biosynthesis. Functionally, cytochrome P450 monooxygenase; part of the gene cluster that mediates the biosynthesis of the indole diterpenes penitrems. The geranylgeranyl diphosphate (GGPP) synthase penG catalyzes the first step in penitrem biosynthesis via conversion of farnesyl pyrophosphate and isopentyl pyrophosphate into geranylgeranyl pyrophosphate (GGPP). Condensation of indole-3-glycerol phosphate with GGPP by the prenyl transferase penC then forms 3-geranylgeranylindole (3-GGI). Epoxidation by the FAD-dependent monooxygenase penM leads to a epoxidized-GGI that is substrate of the terpene cyclase penB for cyclization to yield paspaline. Paspaline is subsequently converted to 13-desoxypaxilline by the cytochrome P450 monooxygenase penP, the latter being then converted to paxilline by the cytochrome P450 monooxygenase penQ. Paxilline is converted to beta-paxitriol via C-10 ketoreduction by the short-chain dehydrogenase PC-15 which can be monoprenylated at the C-20 by the indole diterpene prenyltransferase penD. A two-step elimination (acetylation and elimination) process performed by the O-acetyltransferase PC-16 and the P.simplicissimum ptmI-ortholog not yet identified in P.crustosum, leads to the production of the prenylated form of penijanthine. The FAD-linked oxidoreductase ptmO then converts the prenylated form of penijanthine into PC-M5 which is in turn transformed into PC-M4 by the aromatic dimethylallyltransferase PC-22. A series of oxidation steps involving 4 cytochrome P450 monooxygenases (PC-21, PC-05, PC-23, PC-20) and a FAD-dependent monooxygenase (PC-14) are required for the transformation of PC-M4 to penitrems A and E. Synthesis of these final products is proposed to proceed via penitrems D and C (PC-21, PC-05, PC-14) and penitrems B and F (PC-21, PC-05, PC-14, PC-23). This chain is Cytochrome P450 monooxygenase penP, found in Penicillium crustosum (Blue mold fungus).